The following is a 257-amino-acid chain: Cytochrome c oxidase subunit 3 (257 aa).

6 consecutive transmembrane segments (helical) span residues 13-33 (PWPI…VSYF), 36-56 (LSMY…FQWW), 80-100 (GMIL…WAFF), 154-174 (YISA…FTMF), 195-215 (FFMT…FLLV), and 237-257 (AWYW…MYWW).

This sequence belongs to the cytochrome c oxidase subunit 3 family. As to quaternary structure, component of the cytochrome c oxidase (complex IV, CIV), a multisubunit enzyme composed of a catalytic core of 3 subunits and several supernumerary subunits. The complex exists as a monomer or a dimer and forms supercomplexes (SCs) in the inner mitochondrial membrane with ubiquinol-cytochrome c oxidoreductase (cytochrome b-c1 complex, complex III, CIII).

It is found in the mitochondrion inner membrane. The enzyme catalyses 4 Fe(II)-[cytochrome c] + O2 + 8 H(+)(in) = 4 Fe(III)-[cytochrome c] + 2 H2O + 4 H(+)(out). Component of the cytochrome c oxidase, the last enzyme in the mitochondrial electron transport chain which drives oxidative phosphorylation. The respiratory chain contains 3 multisubunit complexes succinate dehydrogenase (complex II, CII), ubiquinol-cytochrome c oxidoreductase (cytochrome b-c1 complex, complex III, CIII) and cytochrome c oxidase (complex IV, CIV), that cooperate to transfer electrons derived from NADH and succinate to molecular oxygen, creating an electrochemical gradient over the inner membrane that drives transmembrane transport and the ATP synthase. Cytochrome c oxidase is the component of the respiratory chain that catalyzes the reduction of oxygen to water. Electrons originating from reduced cytochrome c in the intermembrane space (IMS) are transferred via the dinuclear copper A center (CU(A)) of subunit 2 and heme A of subunit 1 to the active site in subunit 1, a binuclear center (BNC) formed by heme A3 and copper B (CU(B)). The BNC reduces molecular oxygen to 2 water molecules using 4 electrons from cytochrome c in the IMS and 4 protons from the mitochondrial matrix. The protein is Cytochrome c oxidase subunit 3 (COIII) of Rhipicephalus sanguineus (Brown dog tick).